Here is a 142-residue protein sequence, read N- to C-terminus: Hemoglobin subunit alpha-A (142 aa).

The 141-residue stretch at 2 to 142 (VLSANDKSNV…VGTVLTAKYR (141 aa)) folds into the Globin domain. H59 serves as a coordination point for O2. Position 88 (H88) interacts with heme b.

The protein belongs to the globin family. As to quaternary structure, heterotetramer of two alpha chains and two beta chains. As to expression, red blood cells.

In terms of biological role, involved in oxygen transport from the lung to the various peripheral tissues. The polypeptide is Hemoglobin subunit alpha-A (HBAA) (Columba livia (Rock dove)).